The sequence spans 1030 residues: Toll-like receptor 9 (1030 aa).

The N-terminal stretch at 1-24 (MGPRCTLHPLSLLVQVTALAAALA) is a signal peptide. The Extracellular segment spans residues 25–816 (QGRLPAFLPC…LCLDETLSWN (792 aa)). An intrachain disulfide couples cysteine 34 to cysteine 44. 46-50 (WLFLK) lines the DNA pocket. 26 LRR repeats span residues 61–84 (RANV…DFVH), 86–109 (SSLR…HFPC), 121–146 (VPTL…SLVS), 149–165 (LSRT…LTGL), 166–189 (HALR…ALEV), 197–220 (LGNL…LPPS), 222–241 (ETLL…DLAN), 242–267 (LTAL…CREC), 282–305 (LSRL…WFRG), 307–331 (DRLQ…AFQG), 332–355 (LARL…HLHL), 362–385 (LRSL…TLQP), 389–412 (LPML…IFGA), 414–439 (PGLL…TREV), 469–493 (CKAF…MFAR), 495–518 (SRLE…QFVP), 519–542 (LTSL…SFTE), 544–571 (PRLE…SFVA), 573–597 (LPAL…LCSA), 599–621 (LCAL…LYLR), 626–649 (LRSL…ALDN), 651–674 (PKSL…SLTL), 675–698 (LPKL…SLPS), 700–722 (TQLR…FFAL), 723–746 (AKQL…WFGS), and 748–771 (VGNL…TFVG). N-linked (GlcNAc...) asparagine glycosylation is present at asparagine 63. Residues 71 to 76 (SNRIHH) and 94 to 108 (KWNC…MHFP) each bind DNA. Residues cysteine 97 and cysteine 109 are joined by a disulfide bond. The N-linked (GlcNAc...) asparagine glycan is linked to asparagine 128. DNA contacts are provided by residues tyrosine 131, arginine 151, and 178–180 (YYK). The cysteines at positions 177 and 183 are disulfide-linked. Asparagine 199 is a glycosylation site (N-linked (GlcNAc...) asparagine). Tyrosine 207 is a DNA binding site. Residues asparagine 209 and asparagine 241 are each glycosylated (N-linked (GlcNAc...) asparagine). 2 cysteine pairs are disulfide-bonded: cysteine 254-cysteine 267 and cysteine 257-cysteine 264. Cysteine 257 carries S-palmitoyl cysteine lipidation. Arginine 261 is a DNA binding site. Residue cysteine 264 is the site of S-palmitoyl cysteine attachment. A glycan (N-linked (GlcNAc...) asparagine) is linked at asparagine 339. Cysteines 469 and 499 form a disulfide. A glycan (N-linked (GlcNAc...) asparagine) is linked at asparagine 512. Residue asparagine 566 is glycosylated (N-linked (GlcNAc...) asparagine). N-linked (GlcNAc...) asparagine glycosylation is found at asparagine 668 and asparagine 693. N-linked (GlcNAc...) asparagine glycosylation is present at asparagine 730. 2 disulfides stabilise this stretch: cysteine 763/cysteine 789 and cysteine 765/cysteine 808. Residues 817–837 (CFGISLLAMALGLVVPMLHHL) traverse the membrane as a helical segment. Residues 838–1030 (CGWDLWYCFH…NFCRGPTTAE (193 aa)) lie on the Cytoplasmic side of the membrane. In terms of domain architecture, TIR spans 865-1010 (LFYDAFVVFD…SFWAQLGTAL (146 aa)).

Belongs to the Toll-like receptor family. In terms of assembly, monomer and homodimer. Exists as a monomer in the absence of unmethylated cytidine-phosphate-guanosine (CpG) ligand. Proteolytic processing of an insertion loop (Z-loop) is required for homodimerization upon binding to the unmethylated CpG ligand leading to its activation. Interacts with MYD88 via their respective TIR domains. Interacts with BTK. Interacts (via transmembrane domain) with UNC93B1. Interacts with CD300LH; the interaction may promote full activation of TLR9-triggered innate responses. Interacts with CNPY3 and HSP90B1; this interaction is required for proper folding in the endoplasmic reticulum. Interacts with SMPDL3B. Interacts with CD82; this interaction is essential for TLR9-dependent myddosome formation in response to CpG stimulation. Post-translationally, activated by proteolytic cleavage of the flexible loop between repeats LRR14 and LRR15 within the ectodomain. Cleavage requires UNC93B1. Proteolytically processed by first removing the majority of the ectodomain by either asparagine endopeptidase (AEP) or a cathepsin followed by a trimming event that is solely cathepsin mediated and required for optimal receptor signaling. In terms of processing, palmitoylated by ZDHHC3 in the Golgi regulates TLR9 trafficking from the Golgi to endosomes. Depalmitoylation by PPT1 controls the release of TLR9 from UNC93B1 in endosomes.

It is found in the endoplasmic reticulum membrane. Its subcellular location is the endosome. The protein resides in the lysosome. It localises to the cytoplasmic vesicle. The protein localises to the phagosome. Functionally, key component of innate and adaptive immunity. TLRs (Toll-like receptors) control host immune response against pathogens through recognition of molecular patterns specific to microorganisms. TLR9 is a nucleotide-sensing TLR which is activated by unmethylated cytidine-phosphate-guanosine (CpG) dinucleotides. Acts via MYD88 and TRAF6, leading to NF-kappa-B activation, cytokine secretion and the inflammatory response. Upon CpG stimulation, induces B-cell proliferation, activation, survival and antibody production. The sequence is that of Toll-like receptor 9 (TLR9) from Sus scrofa (Pig).